The chain runs to 725 residues: Heme/hemopexin utilization protein C (725 aa).

Residues Met-1 to Ala-21 form the signal peptide. The 112-residue stretch at Asp-36–Pro-147 folds into the TBDR plug domain. Positions Lys-158–Phe-725 constitute a TBDR beta-barrel domain. The TonB C-terminal box motif lies at Ser-708–Phe-725.

This sequence belongs to the TonB-dependent receptor family.

The protein resides in the cell outer membrane. Functionally, required for utilization of free heme at low concentrations. In Haemophilus influenzae, this protein is Heme/hemopexin utilization protein C (hxuC).